A 338-amino-acid polypeptide reads, in one-letter code: MQVYYDKDCDLSIIQGKKVAIIGYGSQGHAHACNLKDSGVDVTVGLRTGSSSVAKAEAHGLKVADVATAVAAADVVMILTPDEFQSVLYKEEIEPNIKQGATLAFAHGFAIHYNQVVPRADLDVIMVAPKAPGHTVRSEFVKGGGIPDLIAIFQDASGTAKEVALSYASGVGGGRSGIIETTFKDETETDLFGEQAVLCGGAVELVKMGFETLTEAGYAPEMAYFECLHELKLIVDLMYEGGIANMNYSISNNAEYGEYVTGPKVINEESRKAMRQALKDIQQGEYAKNFILEGQSNYPSMTAWRRNNAAHPIEQVGGKLRAMMPWIESNKIIDKTKN.

The 181-residue stretch at 1 to 181 folds into the KARI N-terminal Rossmann domain; that stretch reads MQVYYDKDCD…GGGRSGIIET (181 aa). NADP(+) is bound by residues 24-27, Arg47, Ser50, Ser52, and 82-85; these read YGSQ and DEFQ. His107 is an active-site residue. Gly133 serves as a coordination point for NADP(+). Residues 182–327 form the KARI C-terminal knotted domain; the sequence is TFKDETETDL…GKLRAMMPWI (146 aa). Residues Asp190, Glu194, Glu226, and Glu230 each contribute to the Mg(2+) site. Position 251 (Ser251) interacts with substrate.

Belongs to the ketol-acid reductoisomerase family. The cofactor is Mg(2+).

It carries out the reaction (2R)-2,3-dihydroxy-3-methylbutanoate + NADP(+) = (2S)-2-acetolactate + NADPH + H(+). It catalyses the reaction (2R,3R)-2,3-dihydroxy-3-methylpentanoate + NADP(+) = (S)-2-ethyl-2-hydroxy-3-oxobutanoate + NADPH + H(+). The protein operates within amino-acid biosynthesis; L-isoleucine biosynthesis; L-isoleucine from 2-oxobutanoate: step 2/4. It participates in amino-acid biosynthesis; L-valine biosynthesis; L-valine from pyruvate: step 2/4. Functionally, involved in the biosynthesis of branched-chain amino acids (BCAA). Catalyzes an alkyl-migration followed by a ketol-acid reduction of (S)-2-acetolactate (S2AL) to yield (R)-2,3-dihydroxy-isovalerate. In the isomerase reaction, S2AL is rearranged via a Mg-dependent methyl migration to produce 3-hydroxy-3-methyl-2-ketobutyrate (HMKB). In the reductase reaction, this 2-ketoacid undergoes a metal-dependent reduction by NADPH to yield (R)-2,3-dihydroxy-isovalerate. In Saccharophagus degradans (strain 2-40 / ATCC 43961 / DSM 17024), this protein is Ketol-acid reductoisomerase (NADP(+)).